Reading from the N-terminus, the 213-residue chain is NAD(P)H-hydrate epimerase (213 aa).

In terms of domain architecture, YjeF N-terminal spans 8-210; the sequence is MYNIEENGHA…KIGIPPEAEK (203 aa). 55 to 59 contributes to the (6S)-NADPHX binding site; that stretch reads NNGGD. 2 residues coordinate K(+): Asn56 and Asp122. (6S)-NADPHX is bound by residues 126-132, Tyr137, and Asp155; that span reads GTGITGE. Ser158 serves as a coordination point for K(+).

The protein belongs to the NnrE/AIBP family. K(+) serves as cofactor.

It carries out the reaction (6R)-NADHX = (6S)-NADHX. The catalysed reaction is (6R)-NADPHX = (6S)-NADPHX. Its function is as follows. Catalyzes the epimerization of the S- and R-forms of NAD(P)HX, a damaged form of NAD(P)H that is a result of enzymatic or heat-dependent hydration. This is a prerequisite for the S-specific NAD(P)H-hydrate dehydratase to allow the repair of both epimers of NAD(P)HX. The protein is NAD(P)H-hydrate epimerase of Cenarchaeum symbiosum (strain A).